The following is a 101-amino-acid chain: Large ribosomal subunit protein uL24 (101 aa).

The protein belongs to the universal ribosomal protein uL24 family. In terms of assembly, part of the 50S ribosomal subunit.

Its function is as follows. One of two assembly initiator proteins, it binds directly to the 5'-end of the 23S rRNA, where it nucleates assembly of the 50S subunit. Functionally, one of the proteins that surrounds the polypeptide exit tunnel on the outside of the subunit. The sequence is that of Large ribosomal subunit protein uL24 from Borreliella afzelii (strain PKo) (Borrelia afzelii).